An 878-amino-acid polypeptide reads, in one-letter code: Leucine--tRNA ligase (878 aa).

The short motif at 43–53 (PYPSGRIHMGH) is the 'HIGH' region element. The 'KMSKS' region motif lies at 630–634 (KMSKS). K633 provides a ligand contact to ATP.

The protein belongs to the class-I aminoacyl-tRNA synthetase family.

It is found in the cytoplasm. The catalysed reaction is tRNA(Leu) + L-leucine + ATP = L-leucyl-tRNA(Leu) + AMP + diphosphate. The polypeptide is Leucine--tRNA ligase (Rhodopseudomonas palustris (strain BisB5)).